The following is a 103-amino-acid chain: MAAVSLSVSTVKPLGDRVFIKVSESEEKTAGGILLPDTAKEKPQVGEVAQVGPGKRNDDGSRQAPEVGVGDKVLYSKYAGTDIKLGSDEYVLLSEKDILAVVN.

This sequence belongs to the GroES chaperonin family. In terms of assembly, heptamer of 7 subunits arranged in a ring. Interacts with the chaperonin GroEL.

Its subcellular location is the cytoplasm. Its function is as follows. Together with the chaperonin GroEL, plays an essential role in assisting protein folding. The GroEL-GroES system forms a nano-cage that allows encapsulation of the non-native substrate proteins and provides a physical environment optimized to promote and accelerate protein folding. GroES binds to the apical surface of the GroEL ring, thereby capping the opening of the GroEL channel. In Prochlorococcus marinus (strain SARG / CCMP1375 / SS120), this protein is Co-chaperonin GroES.